Reading from the N-terminus, the 328-residue chain is Apoptosis facilitator Bcl-2-like protein 14 (328 aa).

Serine 44 is modified (phosphoserine). Residues 213-227 (IVELLKFSGDQLGRE) carry the BH3 motif. Positions 309–316 (WVQQNGGW) match the BH2 motif.

The protein belongs to the Bcl-2 family. Post-translationally, phosphorylated by MELK, leading to inhibit its pro-apoptotic function.

Its subcellular location is the cytoplasm. Plays a role in apoptosis. The protein is Apoptosis facilitator Bcl-2-like protein 14 (Bcl2l14) of Mus musculus (Mouse).